A 725-amino-acid polypeptide reads, in one-letter code: Methionine--tRNA ligase (725 aa).

The short motif at 27–37 (PYANGQIHIGH) is the 'HIGH' region element. Positions 158, 161, 171, and 174 each coordinate Zn(2+). The short motif at 348-352 (KMSKS) is the 'KMSKS' region element. Lysine 351 is an ATP binding site. Residues 619-725 (DFAKIDLRIA…SGAKPGMRVK (107 aa)) enclose the tRNA-binding domain.

This sequence belongs to the class-I aminoacyl-tRNA synthetase family. MetG type 1 subfamily. In terms of assembly, homodimer. Zn(2+) serves as cofactor.

It localises to the cytoplasm. The enzyme catalyses tRNA(Met) + L-methionine + ATP = L-methionyl-tRNA(Met) + AMP + diphosphate. Its function is as follows. Is required not only for elongation of protein synthesis but also for the initiation of all mRNA translation through initiator tRNA(fMet) aminoacylation. The chain is Methionine--tRNA ligase from Burkholderia pseudomallei (strain 1106a).